The sequence spans 363 residues: DNA replication and repair protein RecF (363 aa).

An ATP-binding site is contributed by 30–37; the sequence is GNNAQGKT.

Belongs to the RecF family.

It localises to the cytoplasm. Functionally, the RecF protein is involved in DNA metabolism; it is required for DNA replication and normal SOS inducibility. RecF binds preferentially to single-stranded, linear DNA. It also seems to bind ATP. The polypeptide is DNA replication and repair protein RecF (Clostridium acetobutylicum (strain ATCC 824 / DSM 792 / JCM 1419 / IAM 19013 / LMG 5710 / NBRC 13948 / NRRL B-527 / VKM B-1787 / 2291 / W)).